A 128-amino-acid chain; its full sequence is Ribonuclease P protein component (128 aa).

It belongs to the RnpA family. As to quaternary structure, consists of a catalytic RNA component (M1 or rnpB) and a protein subunit.

The catalysed reaction is Endonucleolytic cleavage of RNA, removing 5'-extranucleotides from tRNA precursor.. In terms of biological role, RNaseP catalyzes the removal of the 5'-leader sequence from pre-tRNA to produce the mature 5'-terminus. It can also cleave other RNA substrates such as 4.5S RNA. The protein component plays an auxiliary but essential role in vivo by binding to the 5'-leader sequence and broadening the substrate specificity of the ribozyme. The polypeptide is Ribonuclease P protein component (Prochlorococcus marinus (strain MIT 9312)).